We begin with the raw amino-acid sequence, 295 residues long: Ribosomal RNA small subunit methyltransferase A (295 aa).

Asn-31, Leu-33, Gly-58, Glu-79, Asp-104, and Asn-129 together coordinate S-adenosyl-L-methionine.

This sequence belongs to the class I-like SAM-binding methyltransferase superfamily. rRNA adenine N(6)-methyltransferase family. RsmA subfamily.

Its subcellular location is the cytoplasm. It catalyses the reaction adenosine(1518)/adenosine(1519) in 16S rRNA + 4 S-adenosyl-L-methionine = N(6)-dimethyladenosine(1518)/N(6)-dimethyladenosine(1519) in 16S rRNA + 4 S-adenosyl-L-homocysteine + 4 H(+). In terms of biological role, specifically dimethylates two adjacent adenosines (A1518 and A1519) in the loop of a conserved hairpin near the 3'-end of 16S rRNA in the 30S particle. May play a critical role in biogenesis of 30S subunits. The chain is Ribosomal RNA small subunit methyltransferase A from Leuconostoc mesenteroides subsp. mesenteroides (strain ATCC 8293 / DSM 20343 / BCRC 11652 / CCM 1803 / JCM 6124 / NCDO 523 / NBRC 100496 / NCIMB 8023 / NCTC 12954 / NRRL B-1118 / 37Y).